Reading from the N-terminus, the 253-residue chain is 5-oxoprolinase subunit A (253 aa).

It belongs to the LamB/PxpA family. In terms of assembly, forms a complex composed of PxpA, PxpB and PxpC.

It carries out the reaction 5-oxo-L-proline + ATP + 2 H2O = L-glutamate + ADP + phosphate + H(+). Functionally, catalyzes the cleavage of 5-oxoproline to form L-glutamate coupled to the hydrolysis of ATP to ADP and inorganic phosphate. The chain is 5-oxoprolinase subunit A from Bacillus cereus (strain AH820).